The following is a 600-amino-acid chain: Intraflagellar transport protein 74 homolog (600 aa).

The interval 1 to 33 (MASNHKSSAARPVSRGGVGLTGRPPSGIRPLSG) is disordered. The basic region stretch occupies residues 1 to 90 (MASNHKSSAA…KTGTKGPQRQ (90 aa)). Residue Arg51 is modified to Omega-N-methylarginine. Residue Thr73 is modified to Phosphothreonine. Residues 98 to 482 (LGLLRSKISE…KIKQMTTDLE (385 aa)) are a coiled coil. Residues 561-600 (EFIATKSQESDYQPIKKNVTKQIAEYNKTIVDALHSTSGN) form an important for interaction with IFT27 region.

The protein belongs to the IFT74 family. As to quaternary structure, component of the IFT complex B, at least composed of IFT20, IFT22, IFT25, IFT27, IFT46, IFT52, TRAF3IP1/IFT54, IFT57, IFT74, IFT80, IFT81, and IFT88. Interacts with IFT81; the interaction is direct. Within the IFT complex B, IFT74 and IFT81 mediate the transport of tubulin within the cilium. Interacts (via basic region) with beta-tubulin (via acidic region); interaction is direct. Interacts with ARL13B and IFT88. Interacts (via the IFT74/IFT81 heterodimer) with RABL2B. Interacts with IFT57 and IFT70B. In terms of tissue distribution, highly expressed in adult and fetal kidney and expressed at lower level in adult heart, placenta, lung, liver and pancreas, and in fetal heart, lung and liver. Little to no expression was detected in adult brain and skeletal muscle or in fetal brain, thymus and spleen. Detected in sperm (at protein level).

It is found in the cell projection. The protein localises to the cilium. It localises to the cytoplasmic vesicle. The protein resides in the flagellum. Its subcellular location is the secretory vesicle. It is found in the acrosome. Functionally, component of the intraflagellar transport (IFT) complex B: together with IFT81, forms a tubulin-binding module that specifically mediates transport of tubulin within the cilium. Binds beta-tubulin via its basic region. Required for ciliogenesis. Essential for flagellogenesis during spermatogenesis. The polypeptide is Intraflagellar transport protein 74 homolog (IFT74) (Homo sapiens (Human)).